We begin with the raw amino-acid sequence, 673 residues long: Acetate--CoA ligase [ADP-forming] II (673 aa).

One can recognise an ATP-grasp domain in the interval 9–45 (KALLEKYGIKTAKCIFCETEEQAVKAAKEIGFPVVMK). 35–46 (AKEIGFPVVMKV) contacts ATP.

The protein in the N-terminal section; belongs to the acetate CoA ligase beta subunit family. In the C-terminal section; belongs to the acetate CoA ligase alpha subunit family. As to quaternary structure, homodimer.

It catalyses the reaction acetate + ATP + CoA = acetyl-CoA + ADP + phosphate. Its activity is regulated as follows. Activity requires divalent metal cations. Its function is as follows. Catalyzes the reversible conversion of a variety of acids to the corresponding acyl-CoA esters. Shows the highest activity with the aryl acids, indoleacetate and phenylacetate, as compared to acetate. In the reverse direction, phenylacetyl-CoA is the best substrate. Seems to be involved primarily in the degradation of aryl-CoA esters to the corresponding acids. Participates in the degradation of branched-chain amino acids via branched-chain-acyl-CoA esters. The sequence is that of Acetate--CoA ligase [ADP-forming] II from Archaeoglobus fulgidus (strain ATCC 49558 / DSM 4304 / JCM 9628 / NBRC 100126 / VC-16).